The chain runs to 565 residues: MYRSRNRPKRGGENEVKGPNSALTQFLREEGISAENIKQKWYQRQSKKQEDATDEKKGKAEDDSFTAEISRVVEDEEIDEIGTGSGTETERAQVSYDARMKLVPADSDEEEYETSHISDTPVSLSSANDRESLTKKRQNTAKIIQNRRRKRKRAADLLDRRVNKVSSLQSLCITKISENISKWQKEADESSKLVFNKLRDVLGGVSTANLNNLAKALSKNRALNDHTLQLFLKTDLKRLTFSDCSKISFDGYKTLAIFSPHLTELSLQMCGQLNHESLLYIAEKLPNLKSLNLDGPFLINEDTWEKFFVIMKGRLEEFHISNTHRFTDKSLSNLLINCGSTLVSLGLSRLDSISNYALLPQYLVNDEFHSLCIEYPFNEEDVNDEIIINLLGQIGRTLRKLVLNGCIDLTDSMIINGLTAFIPEKCPLEVLSLEESDQITTDSLSYFFSKVELNNLIECSFRRCLQLGDMAIIELLLNGARDSLRSLNLNSLKELTKEAFVALACPNLTYLDLGFVRCVDDSVIQMLGEQNPNLTVIDVFGDNLVTEKATMRPGLTLIGRQSDSI.

Disordered regions lie at residues 1 to 22 (MYRS…PNSA) and 41 to 68 (WYQR…FTAE). Residues 1 to 200 (MYRSRNRPKR…SKLVFNKLRD (200 aa)) form a hydrophilic region. Over residues 47–62 (KKQEDATDEKKGKAED) the composition is skewed to basic and acidic residues. 2 positions are modified to phosphoserine: S64 and S85. The interval 105–137 (ADSDEEEYETSHISDTPVSLSSANDRESLTKKR) is disordered. The span at 115–127 (SHISDTPVSLSSA) shows a compositional bias: polar residues.

It to S.pombe SpCC613.14. In terms of assembly, component of the global genome repair (GGR) complex composed of at least ABF1, RAD7 and RAD16. Interacts with ELC1.

In terms of biological role, component of the global genome repair (GGR) complex which promotes global genome nucleotide excision repair (GG-NER) which removes DNA damage from nontranscribing DNA. This protein is one of 10 proteins (RAD1, 2,3,4,7,10,14, 16,23 and MMS19) involved in excision repair of DNA damaged with UV light, bulky adducts, or cross-linking agents. This Saccharomyces cerevisiae (strain ATCC 204508 / S288c) (Baker's yeast) protein is DNA repair protein RAD7 (RAD7).